The chain runs to 419 residues: G protein-activated inward rectifier potassium channel 4 (419 aa).

Residues 1–86 are Cytoplasmic-facing; it reads MAGDSRNAMN…LFTTLVDLKW (86 aa). Phosphoserine is present on S5. The chain crosses the membrane as a helical span at residues 87–111; the sequence is RFNLLVFTMVYTITWLFFGFIWWLI. Residues 112–135 lie on the Extracellular side of the membrane; that stretch reads AYVRGDLDHVGDQEWIPCVENLSG. Residues 136–147 constitute an intramembrane region (helical; Pore-forming); the sequence is FVSAFLFSIETE. Positions 148–154 form an intramembrane region, pore-forming; the sequence is TTIGYGF. A Selectivity filter motif is present at residues 149-154; it reads TIGYGF. Over 155–163 the chain is Extracellular; it reads RVITEKCPE. Residues 164–185 traverse the membrane as a helical segment; that stretch reads GIILLLVQAILGSIVNAFMVGC. At 186-419 the chain is on the cytoplasmic side; that stretch reads MFVKISQPKK…SVSQATRGSM (234 aa). The segment at 388-419 is disordered; the sequence is GCAEAGNEAEAEKDEEGEPNGLSVSQATRGSM. Positions 394-405 are enriched in acidic residues; the sequence is NEAEAEKDEEGE. Residues 409 to 419 show a composition bias toward polar residues; that stretch reads LSVSQATRGSM.

This sequence belongs to the inward rectifier-type potassium channel (TC 1.A.2.1) family. KCNJ5 subfamily. Associates with KCNJ3/GIRK1 to form a G-protein-activated heteromultimer pore-forming unit. Associates with KCNJ6/GRIK2 to form a G-protein-activated heteromultimer pore-forming unit. In terms of tissue distribution, expressed in the heart.

The protein localises to the membrane. The catalysed reaction is K(+)(in) = K(+)(out). With respect to regulation, heteromultimer composed of KCNJ3/GIRK1 and KCNJ5/GIRK4 is activated by phosphatidylinositol 4,5 biphosphate (PtdIns(4,5)P2). Functionally, inward rectifier potassium channels are characterized by a greater tendency to allow potassium to flow into the cell rather than out of it. Their voltage dependence is regulated by the concentration of extracellular potassium; as external potassium is raised, the voltage range of the channel opening shifts to more positive voltages. The inward rectification is mainly due to the blockage of outward current by internal magnesium. Can be blocked by external barium. This potassium channel is controlled by G proteins. Forms a functional channel in association with KCNJ3/GIRK1. In Mus musculus (Mouse), this protein is G protein-activated inward rectifier potassium channel 4 (Kcnj5).